A 208-amino-acid chain; its full sequence is Small ribosomal subunit protein uS4 (208 aa).

Positions 30-49 (EKRPYAPGEHGRDRRRTESD) are disordered. The region spanning 95-161 (TRLDNLVLRA…VPFQIAAEGV (67 aa)) is the S4 RNA-binding domain.

It belongs to the universal ribosomal protein uS4 family. As to quaternary structure, part of the 30S ribosomal subunit. Contacts protein S5. The interaction surface between S4 and S5 is involved in control of translational fidelity.

In terms of biological role, one of the primary rRNA binding proteins, it binds directly to 16S rRNA where it nucleates assembly of the body of the 30S subunit. Functionally, with S5 and S12 plays an important role in translational accuracy. In Bifidobacterium longum (strain DJO10A), this protein is Small ribosomal subunit protein uS4.